The sequence spans 1031 residues: Semaphorin-6A (1031 aa).

An N-terminal signal peptide occupies residues 1–18; it reads MRPAALLLCLTLLHCAGA. Residues 19 to 649 lie on the Extracellular side of the membrane; sequence GFPEDSEPIS…KSNDQLVPVT (631 aa). In terms of domain architecture, Sema spans 24 to 512; sequence SEPISISHGN…FSTCVIKVPL (489 aa). 3 N-linked (GlcNAc...) asparagine glycosylation sites follow: Asn33, Asn49, and Asn65. 4 disulfides stabilise this stretch: Cys107-Cys117, Cys135-Cys144, Cys258-Cys369, and Cys283-Cys328. The N-linked (GlcNAc...) asparagine glycan is linked to Asn282. Asn434 and Asn461 each carry an N-linked (GlcNAc...) asparagine glycan. Disulfide bonds link Cys477–Cys506, Cys515–Cys533, Cys521–Cys568, and Cys525–Cys542. A helical transmembrane segment spans residues 650-670; the sequence is LLAIAVILAFVMGAVFSGIIV. Residues 671-1031 lie on the Cytoplasmic side of the membrane; that stretch reads YCVCDHRRKD…TSMKPNDACT (361 aa). At Ser698 the chain carries Phosphoserine. Disordered regions lie at residues 754–777, 861–902, and 914–1031; these read ALPT…SREW, SSKS…TGLS, and GLEY…DACT. The span at 921–931 shows a compositional bias: polar residues; the sequence is YPTNSLTRSHQ. Over residues 932–951 the composition is skewed to low complexity; the sequence is TTTLKRNNTNSSNSSHLSRN. The residue at position 953 (Ser953) is a Phosphoserine. 2 stretches are compositionally biased toward polar residues: residues 971–998 and 1019–1031; these read QVHS…SLTR and PLST…DACT.

The protein belongs to the semaphorin family. In terms of assembly, active as a homodimer or oligomer. The SEMA6A homodimer interacts with a PLXNA2 homodimer, giving rise to a heterotetramer. Interacts with EVL. Particularly high levels in spinal cord, cerebellum, metencephalon, superior and inferior colliculus, diencephalon, olfactory bulb and eye.

It localises to the cell membrane. Its function is as follows. Cell surface receptor for PLXNA2 that plays an important role in cell-cell signaling. Required for normal granule cell migration in the developing cerebellum. Promotes reorganization of the actin cytoskeleton and plays an important role in axon guidance in the developing central nervous system. Can act as repulsive axon guidance cue. Has repulsive action towards migrating granular neurons. May play a role in channeling sympathetic axons into the sympathetic chains and controlling the temporal sequence of sympathetic target innervation. The protein is Semaphorin-6A (Sema6a) of Mus musculus (Mouse).